The following is a 453-amino-acid chain: Na(+)/H(+) antiporter NhaA (453 aa).

The next 11 membrane-spanning stretches (helical) occupy residues 28–48, 79–99, 115–135, 144–164, 173–193, 196–216, 241–261, 321–341, 355–375, 393–413, and 424–444; these read FLHIEAFSGVVLLLAAAAALI, LHFLINDGLMTIFFLVVGMEI, ALPLAAALGGVVVPALIYFIL, GWAVPTATDIAFAVGVLALLG, VFLLALAIIDDIVAVLIIAVF, GGMDYSGFIIAAVGILMVLGM, TGAHPTLAGVVLGLMTPVFAP, VAFGIMPLFALANAGVSLDGI, VLIALVAGKPLGIIGASFLMV, LVGLLAGIGFTMSIFIATLAF, and LGILLASLSAAVLGLAWGFFQ.

It belongs to the NhaA Na(+)/H(+) (TC 2.A.33) antiporter family.

The protein resides in the cell inner membrane. The catalysed reaction is Na(+)(in) + 2 H(+)(out) = Na(+)(out) + 2 H(+)(in). Its function is as follows. Na(+)/H(+) antiporter that extrudes sodium in exchange for external protons. This chain is Na(+)/H(+) antiporter NhaA, found in Janthinobacterium sp. (strain Marseille) (Minibacterium massiliensis).